The chain runs to 423 residues: CinA-like protein (423 aa).

It belongs to the CinA family.

This is CinA-like protein from Chlorobaculum tepidum (strain ATCC 49652 / DSM 12025 / NBRC 103806 / TLS) (Chlorobium tepidum).